Here is a 359-residue protein sequence, read N- to C-terminus: Insulin gene enhancer protein ISL-2 (359 aa).

LIM zinc-binding domains are found at residues 25–86 (AMCV…RLFG) and 87–149 (IKCA…LLER). Positions 151 to 190 (AAGSPRSPGPLPGARGLHLPDAGSGRQPSLRTHVHKQAEK) are disordered. 2 positions are modified to phosphoserine: S154 and S157. The segment at residues 191–250 (TTRVRTVLNEKQLHTLRTCYAANPRPDALMKEQLVEMTGLSPRVIRVWFQNKRCKDKKKS) is a DNA-binding region (homeobox). Positions 272–301 (GTPLVAGSPIRHENAVQGSAVEVQTYQPPW) are LIM-binding domain (LID). Phosphoserine is present on S279. Positions 326-336 (ESGSLGNSSGS) are enriched in low complexity. Residues 326–359 (ESGSLGNSSGSDVTSLSSQLPDTPNSMVPSPVET) form a disordered region. Over residues 337–359 (DVTSLSSQLPDTPNSMVPSPVET) the composition is skewed to polar residues.

Interacts with LHX4.

Its subcellular location is the nucleus. Transcriptional factor that defines subclasses of motoneurons that segregate into columns in the spinal cord and select distinct axon pathways. In Mus musculus (Mouse), this protein is Insulin gene enhancer protein ISL-2 (Isl2).